A 581-amino-acid chain; its full sequence is Proline--tRNA ligase (581 aa).

The protein belongs to the class-II aminoacyl-tRNA synthetase family. ProS type 1 subfamily. Homodimer.

The protein resides in the cytoplasm. It catalyses the reaction tRNA(Pro) + L-proline + ATP = L-prolyl-tRNA(Pro) + AMP + diphosphate. In terms of biological role, catalyzes the attachment of proline to tRNA(Pro) in a two-step reaction: proline is first activated by ATP to form Pro-AMP and then transferred to the acceptor end of tRNA(Pro). As ProRS can inadvertently accommodate and process non-cognate amino acids such as alanine and cysteine, to avoid such errors it has two additional distinct editing activities against alanine. One activity is designated as 'pretransfer' editing and involves the tRNA(Pro)-independent hydrolysis of activated Ala-AMP. The other activity is designated 'posttransfer' editing and involves deacylation of mischarged Ala-tRNA(Pro). The misacylated Cys-tRNA(Pro) is not edited by ProRS. The chain is Proline--tRNA ligase from Rhodococcus opacus (strain B4).